The following is a 311-amino-acid chain: tRNA-cytidine(32) 2-sulfurtransferase (311 aa).

The PP-loop motif signature appears at 47-52 (SGGKDS). 3 residues coordinate [4Fe-4S] cluster: Cys-122, Cys-125, and Cys-213.

This sequence belongs to the TtcA family. In terms of assembly, homodimer. Requires Mg(2+) as cofactor. [4Fe-4S] cluster serves as cofactor.

The protein resides in the cytoplasm. The enzyme catalyses cytidine(32) in tRNA + S-sulfanyl-L-cysteinyl-[cysteine desulfurase] + AH2 + ATP = 2-thiocytidine(32) in tRNA + L-cysteinyl-[cysteine desulfurase] + A + AMP + diphosphate + H(+). Its pathway is tRNA modification. In terms of biological role, catalyzes the ATP-dependent 2-thiolation of cytidine in position 32 of tRNA, to form 2-thiocytidine (s(2)C32). The sulfur atoms are provided by the cysteine/cysteine desulfurase (IscS) system. In Escherichia coli O139:H28 (strain E24377A / ETEC), this protein is tRNA-cytidine(32) 2-sulfurtransferase.